We begin with the raw amino-acid sequence, 597 residues long: Elongation factor 4 (597 aa).

Residues 2-184 (KNIRNFSIIA…EIVAKIPAPA (183 aa)) form the tr-type G domain. Residues 14-19 (DHGKST) and 131-134 (NKID) each bind GTP.

The protein belongs to the TRAFAC class translation factor GTPase superfamily. Classic translation factor GTPase family. LepA subfamily.

It is found in the cell inner membrane. The catalysed reaction is GTP + H2O = GDP + phosphate + H(+). In terms of biological role, required for accurate and efficient protein synthesis under certain stress conditions. May act as a fidelity factor of the translation reaction, by catalyzing a one-codon backward translocation of tRNAs on improperly translocated ribosomes. Back-translocation proceeds from a post-translocation (POST) complex to a pre-translocation (PRE) complex, thus giving elongation factor G a second chance to translocate the tRNAs correctly. Binds to ribosomes in a GTP-dependent manner. This chain is Elongation factor 4, found in Neisseria meningitidis serogroup A / serotype 4A (strain DSM 15465 / Z2491).